The chain runs to 417 residues: UDP-N-acetylglucosamine 1-carboxyvinyltransferase (417 aa).

22-23 serves as a coordination point for phosphoenolpyruvate; sequence KN. Arginine 92 contributes to the UDP-N-acetyl-alpha-D-glucosamine binding site. Residue cysteine 116 is the Proton donor of the active site. Cysteine 116 carries the post-translational modification 2-(S-cysteinyl)pyruvic acid O-phosphothioketal. UDP-N-acetyl-alpha-D-glucosamine-binding positions include 161-164, aspartate 305, and isoleucine 327; that span reads KVSV.

Belongs to the EPSP synthase family. MurA subfamily.

Its subcellular location is the cytoplasm. It catalyses the reaction phosphoenolpyruvate + UDP-N-acetyl-alpha-D-glucosamine = UDP-N-acetyl-3-O-(1-carboxyvinyl)-alpha-D-glucosamine + phosphate. It functions in the pathway cell wall biogenesis; peptidoglycan biosynthesis. In terms of biological role, cell wall formation. Adds enolpyruvyl to UDP-N-acetylglucosamine. This chain is UDP-N-acetylglucosamine 1-carboxyvinyltransferase, found in Pelagibacter ubique (strain HTCC1062).